A 1290-amino-acid polypeptide reads, in one-letter code: MSRSQSPSLNDGLSTSNSRHSSSHSRFSLHKAFPQLSGNASFNGTSPKTKLPSRFSGGSNPPYMDSLKEQESSSSSSRSNFRRANYVNPGRIRSSGLKYSLQAPKELSSIDKINDPASRSIVISGKNHLGLYRFREDYGKLELTLDLFNIDQKAASLRTTTRKTSTISDVKAGFHNYKNYVAICGTSTSVSIYDINRANLVDGPASMVLSKHTRSINSVDFNMAQTSLLISGSQDGCIKVWDLRSSQGRKNKSDLTINSGSDSVRDVKWMPTYDFPNNDDVVAGPSNRSHRFASIHDSGLLLTYDLRQPSQAEKRINAHSGPGLCLSWHPTLDYIMTGGRDGKCCLWNMGSKPLNPASFQNIHHNSSFSTSAASSFTQGFSANSVTNFINSPEAVVNTAHPLTKLKFRPSAIPEVFDSVIALSSLGENSDVSLYSLSRSYIPKNVLTTNSPSCGFVWWNENLIFNIDKQNMVTGWDLGKEPTVLDNLPKNKIAWRDIEGDGLVFLAQDKGGYESGGPDGMSVSTETRNFSQSRLSTTTMSNLFPSHTMRQNSSVSSFPALNTHSNSGANLGDRPSLPRTVTSYSKGAYTQTYGSYNTHSSHHNSAASASASSIATELGSEHVLSPRMISLDLPHILNSIRSAKIENYAKKPSRPGSAAFKDSPVEVFKFLSRELKFSYMHDRNFNKPENLTDQDDLAQSVDDNDLKSHLITRFGFSENNTWTKFIKKSNSPEKDAAVENGTKVNEASIEKVTNSPNDTGSDELSSISKLSTEPKKSDLAERNITAIRQRVKHFIELVSMCDHNAEIYLYIDDLSNFKIWMMMRDSLLWELKQITDSLETDGGSLLSESLLVNPDVTRHSNGARKQSMASDYSSFSTSEVGSTTGVQALPEFRGPHSLSTPPRATTSFGAKEPSSLKKRESTIDENLSETEIEAKGLPKEDIKNLRNQISKHQIGDEVAIEDEEEDKFEEKSSAGTDASNKNIPIIPSERKVSFVDQFINSMRSPKTLHGDFETDGSRMANSASTKRSSQPSFSSSLAGLITRRLSDQSPKTKPKDLIYSKSSGSIAKNSSDLFDFQNVEGNNSPRVLTQKSKISMLLKGLKKSETAPPWDASRLIKKIFEQSVATGNVLLTISIILLFQTTFKVTSTTVVKNALSEFINILHKYELFEIAANLLKFCPWDDILEAGNGQCTVRIYCERCKKLLVNESSKEKFTEEWKRTGRQEVMKRFGYWYCDNCSKRNTLCVLCEQPLKKLTFCVLNCGHEGHPECFKKWFMNEEMSECPSGCSGFLL.

Polar residues-rich tracts occupy residues 1-13 (MSRS…NDGL) and 36-48 (LSGN…TSPK). A disordered region spans residues 1 to 87 (MSRSQSPSLN…RSNFRRANYV (87 aa)). 6 WD repeats span residues 162-203 (RKTS…LVDG), 211-251 (KHTR…GRKN), 259-314 (SGSD…QAEK), 318-357 (AHSG…LNPA), 397-444 (NTAH…IPKN), and 447-485 (TTNS…TVLD). The disordered stretch occupies residues 732–774 (EKDAAVENGTKVNEASIEKVTNSPNDTGSDELSSISKLSTEPK). Residues 750–770 (KVTNSPNDTGSDELSSISKLS) show a composition bias toward polar residues. WD repeat units lie at residues 778–819 (LAER…FKIW) and 821–842 (MMRD…TDGG). Disordered stretches follow at residues 856 to 924 (TRHS…TIDE), 960 to 984 (EDEE…NIPI), and 1004 to 1034 (PKTL…SFSS). Polar residues-rich tracts occupy residues 858–885 (HSNG…TTGV), 896–907 (SLSTPPRATTSF), 972–981 (SAGTDASNKN), and 1018–1034 (MANS…SFSS). WD repeat units follow at residues 1079–1119 (EGNN…KKIF) and 1166–1205 (LFEI…LLVN). The RING-type; degenerate zinc finger occupies 1243–1285 (CVLCEQPLKKLTFCVLNCGHEGHPECFKKWFMNEEMSECPSGC).

The protein belongs to the WD repeat RTC1 family.

The protein localises to the vacuole. Its function is as follows. May be involved in a process influencing telomere capping. The chain is Restriction of telomere capping protein 1 (RTC1) from Lachancea thermotolerans (strain ATCC 56472 / CBS 6340 / NRRL Y-8284) (Yeast).